The primary structure comprises 100 residues: Large ribosomal subunit protein bL21 (100 aa).

This sequence belongs to the bacterial ribosomal protein bL21 family. As to quaternary structure, part of the 50S ribosomal subunit. Contacts protein L20.

Functionally, this protein binds to 23S rRNA in the presence of protein L20. In Corynebacterium urealyticum (strain ATCC 43042 / DSM 7109), this protein is Large ribosomal subunit protein bL21.